The primary structure comprises 359 residues: Cytochrome c oxidase subunit 2 (359 aa).

The first 28 residues, 1–28 (MEQQNKRGLKRKALLGGVLGLGGLAMAG), serve as a signal peptide directing secretion. A lipid anchor (S-diacylglycerol cysteine) is attached at Cys29. Transmembrane regions (helical) follow at residues 64–84 (VWVAAWIIGIIMWGLFLTAIF) and 107–127 (VPLELVLTIVPIIIVMVLFFF). The interval 168–203 (PGGQDYQGSDPERQAAAEASKKDPSGDNPIHGNSKS) is disordered. The segment covering 177-192 (DPERQAAAEASKKDPS) has biased composition (basic and acidic residues). Residues His244, Cys285, Glu287, Cys289, His293, and Met296 each coordinate Cu cation. The segment at 335–359 (YATSTSPFVSDRTATRDGENTQSNA) is disordered.

As to quaternary structure, associates with subunits I, III and IV to form cytochrome c oxidase. The 4 subunit cytochrome c oxidase forms a supercomplex with the menaquinol-cytochrome c reductase complex (cytochrome bc1). It depends on binuclear copper center (CuA) as a cofactor.

Its subcellular location is the cell membrane. It catalyses the reaction 4 Fe(II)-[cytochrome c] + O2 + 8 H(+)(in) = 4 Fe(III)-[cytochrome c] + 2 H2O + 4 H(+)(out). Its function is as follows. Subunits I and II form the functional core of the enzyme complex. Electrons originating in cytochrome c are transferred via heme a and Cu(A) to the binuclear center formed by heme a3 and Cu(B). The chain is Cytochrome c oxidase subunit 2 (ctaC) from Corynebacterium glutamicum (strain ATCC 13032 / DSM 20300 / JCM 1318 / BCRC 11384 / CCUG 27702 / LMG 3730 / NBRC 12168 / NCIMB 10025 / NRRL B-2784 / 534).